The following is a 150-amino-acid chain: NmrA-like family domain-containing protein 1 (150 aa).

NADP(+) contacts are provided by residues 7-12 (GATGAQ), 33-37 (RNPEQ), and K71.

The protein belongs to the NmrA-type oxidoreductase family. As to quaternary structure, homodimer. Interacts with ASS1. Interaction is enhanced by low NADPH/NADP(+) ratios, which results in inhibition of ASS1 activity.

It is found in the cytoplasm. The protein localises to the perinuclear region. Its subcellular location is the nucleus. Redox sensor protein. Undergoes restructuring and subcellular redistribution in response to changes in intracellular NADPH/NADP(+) levels. At low NADPH concentrations the protein is found mainly as a monomer, and binds argininosuccinate synthase (ASS1), the enzyme involved in nitric oxide synthesis. Association with ASS1 impairs its activity and reduces the production of nitric oxide, which subsecuently prevents apoptosis. Under normal NADPH concentrations, the protein is found as a dimer and hides the binding site for ASS1. The homodimer binds one molecule of NADPH. Has higher affinity for NADPH than for NADP(+). Binding to NADPH is necessary to form a stable dimer. The polypeptide is NmrA-like family domain-containing protein 1 (Rattus norvegicus (Rat)).